The following is a 117-amino-acid chain: Larval cuticle protein A2B (117 aa).

The stretch at 12–15 is repeat 1; that stretch reads AAPV. The Chitin-binding type R&amp;R domain occupies 29 to 95; sequence HPQYQYGYDV…AVVHREPLVA (67 aa). Repeat unit 2 spans residues 108-111; sequence AAPV.

In terms of biological role, component of the cuticle of the larva of Tenebrio molitor. In Tenebrio molitor (Yellow mealworm beetle), this protein is Larval cuticle protein A2B.